The primary structure comprises 288 residues: Proteasome assembly chaperone 1 (288 aa).

Ala2 is modified (N-acetylalanine). The tract at residues 13–35 (PCRAGTEDEEEEEEGRRETPEDR) is disordered. The residue at position 18 (Thr18) is a Phosphothreonine. Positions 26–35 (EGRRETPEDR) are enriched in basic and acidic residues. The residue at position 54 (Thr54) is a Phosphothreonine. Residue Ser180 is modified to Phosphoserine. Lys264 carries the N6-acetyllysine modification.

It belongs to the PSMG1 family. As to quaternary structure, forms a heterodimer with PSMG2. The PSMG1-PSMG2 heterodimer interacts directly with the PSMA5 and PSMA7 proteasome alpha subunits. Post-translationally, degraded by the proteasome upon completion of 20S proteasome maturation. In the adult, detected in brain, colon, leukocytes, breast and testis. Widely expressed in the fetus. Also expressed in a variety of proliferating cell lines.

The protein resides in the cytoplasm. It localises to the endoplasmic reticulum. Chaperone protein which promotes assembly of the 20S proteasome as part of a heterodimer with PSMG2. The PSMG1-PSMG2 heterodimer binds to the PSMA5 and PSMA7 proteasome subunits, promotes assembly of the proteasome alpha subunits into the heteroheptameric alpha ring and prevents alpha ring dimerization. The protein is Proteasome assembly chaperone 1 of Homo sapiens (Human).